Here is a 128-residue protein sequence, read N- to C-terminus: Transcription antitermination protein NusB (128 aa).

The protein belongs to the NusB family.

Its function is as follows. Involved in transcription antitermination. Required for transcription of ribosomal RNA (rRNA) genes. Binds specifically to the boxA antiterminator sequence of the ribosomal RNA (rrn) operons. This is Transcription antitermination protein NusB from Listeria welshimeri serovar 6b (strain ATCC 35897 / DSM 20650 / CCUG 15529 / CIP 8149 / NCTC 11857 / SLCC 5334 / V8).